The sequence spans 31 residues: Antifungal protein 1 (31 aa).

Basic and acidic residues-rich tracts occupy residues proline 1–methionine 10 and aspartate 18–glutamate 31. Positions proline 1–glutamate 31 are disordered.

As to quaternary structure, heterodimer; disulfide-linked. In terms of processing, disulfide bonds.

Has antifungal activity against C.gloeosporioides but not against B.cinerea and Fusarium sp. or against various yeasts. Has no antibacterial activity. The sequence is that of Antifungal protein 1 from Passiflora alata (Winged-stem passion flower).